A 341-amino-acid chain; its full sequence is Protein pelota homolog (341 aa).

This sequence belongs to the eukaryotic release factor 1 family. Pelota subfamily. In terms of assembly, monomer. A divalent metal cation is required as a cofactor.

It localises to the cytoplasm. In terms of biological role, may function in recognizing stalled ribosomes, interact with stem-loop structures in stalled mRNA molecules, and effect endonucleolytic cleavage of the mRNA. May play a role in the release non-functional ribosomes and degradation of damaged mRNAs. Has endoribonuclease activity. The sequence is that of Protein pelota homolog from Methanoculleus marisnigri (strain ATCC 35101 / DSM 1498 / JR1).